The primary structure comprises 67 residues: Large ribosomal subunit protein bL35 (67 aa).

Belongs to the bacterial ribosomal protein bL35 family.

The sequence is that of Large ribosomal subunit protein bL35 from Acidovorax ebreus (strain TPSY) (Diaphorobacter sp. (strain TPSY)).